Reading from the N-terminus, the 352-residue chain is Nuclear receptor subfamily 1 group I member 3 (352 aa).

The nuclear receptor DNA-binding region spans 8–83 (LRNCVVCGDQ…AGMRKDMILS (76 aa)). An NR C4-type zinc finger spans residues 11 to 31 (CVVCGDQATGYHFNALTCEGC). The residue at position 38 (threonine 38) is a Phosphothreonine; by PKC. An NR C4-type zinc finger spans residues 47–71 (CPFAGSCEVSKTQRRHCPACRLQKC). An NR LBD domain is found at 109 to 352 (EQEELIRTLL…MMPLLQEICS (244 aa)).

This sequence belongs to the nuclear hormone receptor family. NR1 subfamily. Interacts with ECT2. Heterodimer of NR1I3 and RXR. Interacts with PSMC4. Directly interacts with DNAJC7. The DNAJC7-NR1I3 complex may also include HSP90. Interacts with CRY1. Interacts with CRY2 in a ligand-dependent manner. Post-translationally, phosphorylated at Thr-38 by PKC, dephosphorylation of Thr-38 is required for nuclear translocation and activation. Predominantly expressed in liver.

It localises to the nucleus. The protein localises to the cytoplasm. Its subcellular location is the cytoskeleton. Functionally, binds and transactivates the retinoic acid response elements that control expression of the retinoic acid receptor beta 2 and alcohol dehydrogenase 3 genes. Transactivates both the phenobarbital responsive element module of the human CYP2B6 gene and the CYP3A4 xenobiotic response element. In Homo sapiens (Human), this protein is Nuclear receptor subfamily 1 group I member 3 (NR1I3).